The chain runs to 2119 residues: Outer kinetochore KNL1 complex subunit KNL1 (2119 aa).

A disordered region spans residues 1–59 (MDGVYSEANEENDNTQRPVRRQHSSILKPPRSPLQDLKCGNQTNQEPNPPRKRKSSRRV). Residues 1-202 (MDGVYSEANE…SDNFIKRLKT (202 aa)) form a may mediate oligomerization region. Interaction with microtubules regions lie at residues 17–34 (RPVR…RSPL) and 53–80 (RKSS…ERNS). An interaction with PP1CA; contains the protein phosphatase 1 (PP1) interaction motifs SILK, RVXF and phi-phi region spans residues 23 to 80 (HSSILKPPRSPLQDLKCGNQTNQEPNPPRKRKSSRRVSFADTIKVFQTESHMKTERNS). Residues Ser-24, Ser-32, and Ser-60 each carry the phosphoserine modification. Residues 124–140 (ENQMDLTASHTVMITKG) form an interaction with BUB1 region. Residues 160-179 (ENLKHHAANSRIKKDLACST) form an interaction with BUB1B region. The residue at position 538 (Ser-538) is a Phosphoserine. Phosphothreonine is present on residues Thr-540 and Thr-739. Repeat unit 1 spans residues 723–827 (DKTILFSEGN…MTKSHTVFID (105 aa)). The tract at residues 723 to 1027 (DKTILFSEGN…VTRSHTVFID (305 aa)) is 2 X 104 AA approximate repeats. Ser-794 and Ser-878 each carry phosphoserine. Residues 923–1027 (KSITFPENDK…VTRSHTVFID (105 aa)) form repeat 2. Phosphoserine occurs at positions 1243 and 1464. The tract at residues 1557–1583 (SQRESLPSENKTENCRAQKRTRVEEND) is disordered. Residues 1566-1583 (NKTENCRAQKRTRVEEND) show a composition bias toward basic and acidic residues. The Nuclear localization signal signature appears at 1577–1590 (TRVEENDVTNEKKI). Phosphoserine is present on residues Ser-1616, Ser-1627, and Ser-1642. Residues 1763–1890 (KVKDYSDEEL…FLEVETQKTQ (128 aa)) are required for interaction with ZWINT. Residues 1799-1890 (VALYNKLVHS…FLEVETQKTQ (92 aa)) are a coiled coil. An interaction with NSL1, DSN1 and required for assembly into the outer kinetochore region spans residues 1873 to 2093 (EEEELQRKFL…GKTGHDEIAA (221 aa)).

In terms of assembly, component of the KNL1 complex composed of KNL1 and ZWINT. Part of the ten-subunit outer kinetochore KMN network that includes the KNL1, MIS12 and NDC80 complexes; a bioriented kinetochore contains approximately 150 copies of the network. Interacts (via C-terminus) with the MIS12 complex subunits NSL1 (via C-terminus), PMF1 and DSN1; the interaction is direct. Interacts (via N-terminal region) with BUB1B (via BUB1 N-terminal domain); the interaction is direct and is required for cell cycle arrest upon activation of the mitotic spindle assembly checkpoint. Interacts (via N-terminal region) with BUB1 (via BUB1 N-terminal domain); the interaction is direct. Interacts with the protein phosphatase PP1 subunit PPP1CA; the interaction is direct and mutually exclusive with binding to microtubules. Interacts with the protein phosphatase PP1 subunit PPP1CC; the interaction is direct and mutually exclusive with binding to microtubules. In terms of processing, phosphorylation by AURKB negatively regulates its interaction with protein phosphatase 1 (PP1) subunit PPP1CA and with microtubules. As to expression, expressed in oocytes during meiotic progression (at protein level). Expressed during spermatogenesis.

The protein resides in the nucleus. Its subcellular location is the chromosome. It is found in the centromere. The protein localises to the kinetochore. It localises to the cytoplasm. Its function is as follows. Acts as a component of the outer kinetochore KNL1 complex that serves as a docking point for spindle assembly checkpoint components and mediates microtubule-kinetochore interactions. Kinetochores, consisting of a centromere-associated inner segment and a microtubule-contacting outer segment, play a crucial role in chromosome segregation by mediating the physical connection between centromeric DNA and spindle microtubules. The outer kinetochore is made up of the ten-subunit KMN network, comprising the MIS12, NDC80 and KNL1 complexes, and auxiliary microtubule-associated components; together they connect the outer kinetochore with the inner kinetochore, bind microtubules, and mediate interactions with mitotic checkpoint proteins that delay anaphase until chromosomes are bioriented on the spindle. Required for kinetochore binding by a distinct subset of kMAPs (kinetochore-bound microtubule-associated proteins) and motors. Acts in coordination with CENPK to recruit the NDC80 complex to the outer kinetochore. Can bind either to microtubules or to the protein phosphatase 1 (PP1) catalytic subunits PPP1CA and PPP1CC (via overlapping binding sites), it has higher affinity for PP1. Recruits MAD2L1 to the kinetochore and also directly links BUB1 and BUB1B to the kinetochore. In addition to orienting mitotic chromosomes, it is also essential for alignment of homologous chromosomes during meiotic metaphase I. In meiosis I, required to activate the spindle assembly checkpoint at unattached kinetochores to correct erroneous kinetochore-microtubule attachments. This chain is Outer kinetochore KNL1 complex subunit KNL1, found in Mus musculus (Mouse).